The chain runs to 156 residues: Ribosomal RNA large subunit methyltransferase H (156 aa).

Residues L73, G104, and 123–128 each bind S-adenosyl-L-methionine; that span reads ISSMTL.

The protein belongs to the RNA methyltransferase RlmH family. Homodimer.

The protein resides in the cytoplasm. The enzyme catalyses pseudouridine(1915) in 23S rRNA + S-adenosyl-L-methionine = N(3)-methylpseudouridine(1915) in 23S rRNA + S-adenosyl-L-homocysteine + H(+). In terms of biological role, specifically methylates the pseudouridine at position 1915 (m3Psi1915) in 23S rRNA. This is Ribosomal RNA large subunit methyltransferase H from Burkholderia ambifaria (strain MC40-6).